Here is a 259-residue protein sequence, read N- to C-terminus: Phosphatidate cytidylyltransferase (259 aa).

Transmembrane regions (helical) follow at residues 31-51, 69-89, 103-123, 129-149, 170-190, 193-213, and 236-256; these read LVIFLPKSLFLLVILFLCFAI, PLVLLTYYFADPLVFPLIGLL, FFKSTFLLFYPALFLVYLIKI, YYLLIFIFGIWINDVFAYYIG, FLGGVLFGSLFFALTLPYGIL, FLLGTFVLTVGVAGDYFKSFI, and FDALVFSAPVFYLIMCAGELN.

This sequence belongs to the CDS family.

It is found in the cell membrane. It carries out the reaction a 1,2-diacyl-sn-glycero-3-phosphate + CTP + H(+) = a CDP-1,2-diacyl-sn-glycerol + diphosphate. The protein operates within phospholipid metabolism; CDP-diacylglycerol biosynthesis; CDP-diacylglycerol from sn-glycerol 3-phosphate: step 3/3. This chain is Phosphatidate cytidylyltransferase (cdsA), found in Aquifex aeolicus (strain VF5).